Consider the following 122-residue polypeptide: Small ribosomal subunit protein uS13 (122 aa).

The segment at 99 to 122 (RGQRTHTNARTRKGPAKAIAGKKK) is disordered.

It belongs to the universal ribosomal protein uS13 family. In terms of assembly, part of the 30S ribosomal subunit. Forms a loose heterodimer with protein S19. Forms two bridges to the 50S subunit in the 70S ribosome.

Functionally, located at the top of the head of the 30S subunit, it contacts several helices of the 16S rRNA. In the 70S ribosome it contacts the 23S rRNA (bridge B1a) and protein L5 of the 50S subunit (bridge B1b), connecting the 2 subunits; these bridges are implicated in subunit movement. Contacts the tRNAs in the A and P-sites. The chain is Small ribosomal subunit protein uS13 from Agrobacterium fabrum (strain C58 / ATCC 33970) (Agrobacterium tumefaciens (strain C58)).